The primary structure comprises 72 residues: Translation initiation factor IF-1 (72 aa).

The S1-like domain occupies 1–72; it reads MSNDDSIEFE…TKGRITYRMK (72 aa).

It belongs to the IF-1 family. As to quaternary structure, component of the 30S ribosomal translation pre-initiation complex which assembles on the 30S ribosome in the order IF-2 and IF-3, IF-1 and N-formylmethionyl-tRNA(fMet); mRNA recruitment can occur at any time during PIC assembly.

The protein resides in the cytoplasm. Its function is as follows. One of the essential components for the initiation of protein synthesis. Stabilizes the binding of IF-2 and IF-3 on the 30S subunit to which N-formylmethionyl-tRNA(fMet) subsequently binds. Helps modulate mRNA selection, yielding the 30S pre-initiation complex (PIC). Upon addition of the 50S ribosomal subunit IF-1, IF-2 and IF-3 are released leaving the mature 70S translation initiation complex. This chain is Translation initiation factor IF-1, found in Xanthomonas campestris pv. campestris (strain B100).